Reading from the N-terminus, the 460-residue chain is Serine--tRNA ligase (460 aa).

Basic and acidic residues predominate over residues 43–66; the sequence is AEGDGLRQERNEVSSKIGELKQDG. The disordered stretch occupies residues 43-81; the sequence is AEGDGLRQERNEVSSKIGELKQDGKDEEAQEAIDRSQEL. 242 to 244 provides a ligand contact to L-serine; it reads TAE. ATP contacts are provided by residues 273–275 and valine 289; that span reads RRE. Residue glutamate 296 participates in L-serine binding. 369–372 is a binding site for ATP; the sequence is EVSS. Serine 405 is an L-serine binding site.

It belongs to the class-II aminoacyl-tRNA synthetase family. Type-1 seryl-tRNA synthetase subfamily. Homodimer. The tRNA molecule binds across the dimer.

The protein localises to the cytoplasm. It carries out the reaction tRNA(Ser) + L-serine + ATP = L-seryl-tRNA(Ser) + AMP + diphosphate + H(+). The catalysed reaction is tRNA(Sec) + L-serine + ATP = L-seryl-tRNA(Sec) + AMP + diphosphate + H(+). Its pathway is aminoacyl-tRNA biosynthesis; selenocysteinyl-tRNA(Sec) biosynthesis; L-seryl-tRNA(Sec) from L-serine and tRNA(Sec): step 1/1. Functionally, catalyzes the attachment of serine to tRNA(Ser). Is also probably able to aminoacylate tRNA(Sec) with serine, to form the misacylated tRNA L-seryl-tRNA(Sec), which will be further converted into selenocysteinyl-tRNA(Sec). This chain is Serine--tRNA ligase (serS), found in Haloarcula marismortui (strain ATCC 43049 / DSM 3752 / JCM 8966 / VKM B-1809) (Halobacterium marismortui).